The following is a 151-amino-acid chain: Deoxyuridine 5'-triphosphate nucleotidohydrolase (151 aa).

Residues 70-72, Asn-83, 87-89, and Met-97 contribute to the substrate site; these read RSG and LID.

It belongs to the dUTPase family. The cofactor is Mg(2+).

It carries out the reaction dUTP + H2O = dUMP + diphosphate + H(+). Its pathway is pyrimidine metabolism; dUMP biosynthesis; dUMP from dCTP (dUTP route): step 2/2. Functionally, this enzyme is involved in nucleotide metabolism: it produces dUMP, the immediate precursor of thymidine nucleotides and it decreases the intracellular concentration of dUTP so that uracil cannot be incorporated into DNA. The sequence is that of Deoxyuridine 5'-triphosphate nucleotidohydrolase from Actinobacillus succinogenes (strain ATCC 55618 / DSM 22257 / CCUG 43843 / 130Z).